A 208-amino-acid chain; its full sequence is Uracil phosphoribosyltransferase (208 aa).

5-phospho-alpha-D-ribose 1-diphosphate-binding positions include Arg-78, Arg-103, and 130-138 (DPMLATGGT). Uracil-binding positions include Ile-193 and 198–200 (GDA). Asp-199 is a 5-phospho-alpha-D-ribose 1-diphosphate binding site.

It belongs to the UPRTase family. It depends on Mg(2+) as a cofactor.

It carries out the reaction UMP + diphosphate = 5-phospho-alpha-D-ribose 1-diphosphate + uracil. Its pathway is pyrimidine metabolism; UMP biosynthesis via salvage pathway; UMP from uracil: step 1/1. Allosterically activated by GTP. Its function is as follows. Catalyzes the conversion of uracil and 5-phospho-alpha-D-ribose 1-diphosphate (PRPP) to UMP and diphosphate. The polypeptide is Uracil phosphoribosyltransferase (Nitratidesulfovibrio vulgaris (strain ATCC 29579 / DSM 644 / CCUG 34227 / NCIMB 8303 / VKM B-1760 / Hildenborough) (Desulfovibrio vulgaris)).